An 803-amino-acid polypeptide reads, in one-letter code: Leucine--tRNA ligase (803 aa).

The 'HIGH' region signature appears at 40-51; it reads PYPSGQGLHVGH. Positions 575–579 match the 'KMSKS' region motif; the sequence is KMSKS. Residue lysine 578 coordinates ATP.

Belongs to the class-I aminoacyl-tRNA synthetase family.

Its subcellular location is the cytoplasm. It catalyses the reaction tRNA(Leu) + L-leucine + ATP = L-leucyl-tRNA(Leu) + AMP + diphosphate. The polypeptide is Leucine--tRNA ligase (Lacticaseibacillus paracasei (strain ATCC 334 / BCRC 17002 / CCUG 31169 / CIP 107868 / KCTC 3260 / NRRL B-441) (Lactobacillus paracasei)).